The following is a 265-amino-acid chain: Indole-3-glycerol phosphate synthase (265 aa).

It belongs to the TrpC family.

The catalysed reaction is 1-(2-carboxyphenylamino)-1-deoxy-D-ribulose 5-phosphate + H(+) = (1S,2R)-1-C-(indol-3-yl)glycerol 3-phosphate + CO2 + H2O. The protein operates within amino-acid biosynthesis; L-tryptophan biosynthesis; L-tryptophan from chorismate: step 4/5. The chain is Indole-3-glycerol phosphate synthase from Xanthomonas oryzae pv. oryzae (strain MAFF 311018).